Consider the following 84-residue polypeptide: Small ribosomal subunit protein eS27 (84 aa).

A compositionally biased stretch (basic and acidic residues) spans 1–16 (MPLAKDLLHPSPEEEK). The disordered stretch occupies residues 1-23 (MPLAKDLLHPSPEEEKRKHKKKR). The residue at position 11 (Ser-11) is a Phosphoserine. Residues 38 to 60 (PGCYKITTVFSHAQTVVLCVGCS) form a C4-type zinc finger.

This sequence belongs to the eukaryotic ribosomal protein eS27 family. In terms of assembly, component of the small ribosomal subunit. Part of the small subunit (SSU) processome, composed of more than 70 proteins and the RNA chaperone small nucleolar RNA (snoRNA) U3. The cofactor is Zn(2+).

Its subcellular location is the cytoplasm. It localises to the nucleus. It is found in the nucleolus. In terms of biological role, component of the small ribosomal subunit. The ribosome is a large ribonucleoprotein complex responsible for the synthesis of proteins in the cell. Required for proper rRNA processing and maturation of 18S rRNAs. Part of the small subunit (SSU) processome, first precursor of the small eukaryotic ribosomal subunit. During the assembly of the SSU processome in the nucleolus, many ribosome biogenesis factors, an RNA chaperone and ribosomal proteins associate with the nascent pre-rRNA and work in concert to generate RNA folding, modifications, rearrangements and cleavage as well as targeted degradation of pre-ribosomal RNA by the RNA exosome. This Mus musculus (Mouse) protein is Small ribosomal subunit protein eS27.